The following is a 339-amino-acid chain: Serpentine receptor class alpha-24 (339 aa).

The next 7 helical transmembrane spans lie at 26 to 46 (ITVK…YYFA), 65 to 82 (LILL…TTML), 112 to 132 (ELFV…SLAF), 151 to 171 (VSIF…YVGL), 199 to 219 (FRTL…YLSV), 248 to 268 (VCIL…GVNY), and 284 to 304 (LAPF…VIHC).

Belongs to the nematode receptor-like protein sra family.

The protein localises to the membrane. In Caenorhabditis elegans, this protein is Serpentine receptor class alpha-24 (sra-24).